Here is a 559-residue protein sequence, read N- to C-terminus: (R)-mandelonitrile lyase 1 (559 aa).

The N-terminal stretch at 1–27 (MEKSTMSVILFVLHLLVLHLQYSEVHS) is a signal peptide. Asn-30 and Asn-44 each carry an N-linked (GlcNAc...) asparagine glycan. FAD contacts are provided by residues 63–64 (TS), 82–83 (ER), Thr-133, and 137–140 (NAGV). 4 N-linked (GlcNAc...) asparagine glycosylation sites follow: Asn-145, Asn-162, Asn-178, and Asn-218. Val-244 contacts FAD. 7 N-linked (GlcNAc...) asparagine glycosylation sites follow: Asn-252, Asn-255, Asn-309, Asn-380, Asn-402, Asn-420, and Asn-467. Cysteines 427 and 478 form a disulfide. Tyr-485 provides a ligand contact to substrate. Position 486–487 (486–487 (WH)) interacts with FAD. Catalysis depends on His-487, which acts as the Proton donor. His-525 serves as the catalytic Proton acceptor. 526 to 527 (PQ) lines the FAD pocket.

Belongs to the GMC oxidoreductase family. In terms of assembly, monomer. It depends on FAD as a cofactor.

The catalysed reaction is (R)-mandelonitrile = benzaldehyde + hydrogen cyanide. Functionally, involved in cyanogenesis, the release of HCN from injured tissues. Catalyzes the stereospecific addition of HCN to a variety of aldehydes in vitro. It is a major seed constituent, and could have the additional role of a storage form for reduced nitrogen. The sequence is that of (R)-mandelonitrile lyase 1 (MDL1) from Prunus dulcis (Almond).